Consider the following 473-residue polypeptide: Photosystem II CP43 reaction center protein (473 aa).

The propeptide occupies methionine 1 to glutamate 14. Position 15 is an N-acetylthreonine (threonine 15). Residue threonine 15 is modified to Phosphothreonine. 5 helical membrane-spanning segments follow: residues leucine 69–alanine 93, leucine 134–asparagine 155, lysine 178–threonine 200, lysine 255–serine 275, and tryptophan 291–alanine 312. Glutamate 367 lines the [CaMn4O5] cluster pocket. A helical membrane pass occupies residues arginine 447–proline 471.

The protein belongs to the PsbB/PsbC family. PsbC subfamily. In terms of assembly, PSII is composed of 1 copy each of membrane proteins PsbA, PsbB, PsbC, PsbD, PsbE, PsbF, PsbH, PsbI, PsbJ, PsbK, PsbL, PsbM, PsbT, PsbX, PsbY, PsbZ, Psb30/Ycf12, at least 3 peripheral proteins of the oxygen-evolving complex and a large number of cofactors. It forms dimeric complexes. The cofactor is Binds multiple chlorophylls and provides some of the ligands for the Ca-4Mn-5O cluster of the oxygen-evolving complex. It may also provide a ligand for a Cl- that is required for oxygen evolution. PSII binds additional chlorophylls, carotenoids and specific lipids..

It localises to the plastid. It is found in the chloroplast thylakoid membrane. In terms of biological role, one of the components of the core complex of photosystem II (PSII). It binds chlorophyll and helps catalyze the primary light-induced photochemical processes of PSII. PSII is a light-driven water:plastoquinone oxidoreductase, using light energy to abstract electrons from H(2)O, generating O(2) and a proton gradient subsequently used for ATP formation. The protein is Photosystem II CP43 reaction center protein of Adiantum capillus-veneris (Maidenhair fern).